The chain runs to 659 residues: Threonine--tRNA ligase (659 aa).

Positions 7–70 (DSELIKLTLP…QQDGAIEIVT (64 aa)) constitute a TGS domain. The interval 253–555 (DHRKLGSELE…LIENFAGNFP (303 aa)) is catalytic. The Zn(2+) site is built by C351, H402, and H532.

Belongs to the class-II aminoacyl-tRNA synthetase family. As to quaternary structure, homodimer. Zn(2+) is required as a cofactor.

Its subcellular location is the cytoplasm. The catalysed reaction is tRNA(Thr) + L-threonine + ATP = L-threonyl-tRNA(Thr) + AMP + diphosphate + H(+). Its function is as follows. Catalyzes the attachment of threonine to tRNA(Thr) in a two-step reaction: L-threonine is first activated by ATP to form Thr-AMP and then transferred to the acceptor end of tRNA(Thr). Also edits incorrectly charged L-seryl-tRNA(Thr). The sequence is that of Threonine--tRNA ligase from Chloroherpeton thalassium (strain ATCC 35110 / GB-78).